The primary structure comprises 1115 residues: Calcium-transporting ATPase PAT1 (1115 aa).

Residues 1 to 99 (MTGSHEMESI…SIVLDALSDH (99 aa)) are Stromal-facing. A helical transmembrane segment spans residues 100–120 (ILILLIVAAVVSIVLGSIDYT). Over 121-126 (SDHPET) the chain is Lumenal. The helical transmembrane segment at 127–147 (GWIDGVAILVAVILVVGITSL) threads the bilayer. Topologically, residues 148–235 (NDFKNQARFR…KGQPQDNMDP (88 aa)) are stromal. The helical transmembrane segment at 236–256 (FLISGSMVIEGFGTMLVTAVG) threads the bilayer. Over 257 to 287 (VNSFNGKTMMGLRVASEDTPLQMKLSVLASR) the chain is Lumenal. A helical transmembrane segment spans residues 288–308 (IGYFGMGAAILMLLIAIPKYF). The Stromal portion of the chain corresponds to 309 to 328 (IQRKVHDIEITREDAQPIVQ). The chain crosses the membrane as a helical span at residues 329–349 (LVISAITIVVVAVPEGLPLAV). Residues 350–735 (TMALAYGMMK…GRNIYDAICK (386 aa)) lie on the Lumenal side of the membrane. Asp-385 (4-aspartylphosphate intermediate) is an active-site residue. Positions 678 and 682 each coordinate Mg(2+). Residues 736 to 756 (FLQFQLTVNVVAVTVAFIGTL) traverse the membrane as a helical segment. Residues 757–832 (TSDVVEDKDN…GKNAPLITRS (76 aa)) are Stromal-facing. The interval 762-784 (EDKDNSSSSGSADKVTEEEPRQG) is disordered. The helical transmembrane segment at 833 to 853 (MWKNIIGQAALQLAILFTILY) threads the bilayer. Over 854-873 (QGHNIFQHFVPQAHGPIIKN) the chain is Lumenal. Residues 874–894 (GLHHYTLVFNCFVFLQLFNEI) traverse the membrane as a helical segment. Residues 895 to 913 (NARVLGSRTNPFKNFFNNP) lie on the Stromal side of the membrane. The helical transmembrane segment at 914-934 (IFIAVMIFTLGVQIIFVTFGG) threads the bilayer. At 935-943 (SATSTDSLY) the chain is on the lumenal side. A helical membrane pass occupies residues 944-964 (IVEWICCVVVGAISLPVGLLL). Residues 965-1115 (RKIPIREPVV…LHLPVNQINN (151 aa)) are Stromal-facing. The disordered stretch occupies residues 984–1056 (AVYTSPSPNP…IPSSSSNLVN (73 aa)). Residues 1040–1053 (NDNINTPIPSSSSN) are compositionally biased toward low complexity.

It belongs to the cation transport ATPase (P-type) (TC 3.A.3) family. Type IIB subfamily.

Its subcellular location is the contractile vacuole membrane. It is found in the cell membrane. It catalyses the reaction Ca(2+)(in) + ATP + H2O = Ca(2+)(out) + ADP + phosphate + H(+). Functionally, calcium ATPase involved in Ca(2+) homeostasis as a component of the contractile vacuole complex. This is Calcium-transporting ATPase PAT1 (patA) from Dictyostelium discoideum (Social amoeba).